We begin with the raw amino-acid sequence, 399 residues long: Protein LIGULELESS 1 (399 aa).

The interval 1–28 is disordered; sequence MMNLSAAANGRDEFPPYVVPSNAAAPPP. Positions 15–24 are enriched in low complexity; that stretch reads PPYVVPSNAA. Residues 182-260 form an SBP-type zinc finger; the sequence is PPRCQAEGCK…ADHNRRRRKS (79 aa). Residues Cys185, Cys190, Cys207, His210, Cys227, Cys230, His234, and Cys246 each coordinate Zn(2+). The Bipartite nuclear localization signal motif lies at 243 to 259; that stretch reads KKSCRKRLADHNRRRRK. Positions 250–292 are disordered; the sequence is LADHNRRRRKSKPSDADAGDKKRAHANKAAAAKDKAESSSKNM. Basic and acidic residues predominate over residues 261–270; it reads KPSDADAGDK.

As to expression, leaf ligular region, blade and sheath.

It localises to the nucleus. In terms of biological role, involved in the formation of ligules and auricles during leaf organogenesis. This Zea mays (Maize) protein is Protein LIGULELESS 1 (LG1).